The sequence spans 64 residues: Putative antitoxin VapB4 (64 aa).

It belongs to the UPF0165 family.

Its function is as follows. Possibly the antitoxin component of a type II toxin-antitoxin (TA) system. Its cognate toxin is VapC4 (Potential). In Archaeoglobus fulgidus (strain ATCC 49558 / DSM 4304 / JCM 9628 / NBRC 100126 / VC-16), this protein is Putative antitoxin VapB4 (vapB4).